The primary structure comprises 348 residues: Large ribosomal subunit protein uL3m (348 aa).

The transit peptide at methionine 1–serine 40 directs the protein to the mitochondrion.

Belongs to the universal ribosomal protein uL3 family. Component of the mitochondrial ribosome large subunit (39S) which comprises a 16S rRNA and about 50 distinct proteins.

It localises to the mitochondrion. This is Large ribosomal subunit protein uL3m (MRPL3) from Bos taurus (Bovine).